Consider the following 356-residue polypeptide: MGACMSKNDEETEQKKRSQKIDRDLEEDSKKLRKECKILLLGSGESGKSTIVKQMKIIHLKGYSDEELTNYRPTVYKNLLECAKAVVNAMHQFDIQPADPSLRPYVEFLQDYNMEGCPPGQSIDPKVGTAIQALWNDPAKEQLMERQTEFYLMDSAEYFFTEVMRIVAEDYRPNEMDVLRARTKTTGIYETRFKMGQLSIHMFDVGGQRSERKKWIHCFENVTSIIFCVALSEYDQVLLEESSQNRMMESLLLFDSVVNSRWFMRTSIILFLNKVDIFKQKLGRSPLGNYFPDYSGGNDVNKAAKYLLWRFNQVNRAHLNLYPHLTQATDTSNIRLVFAAVKETILNNALKDSGIL.

The tract at residues 1-26 (MGACMSKNDEETEQKKRSQKIDRDLE) is disordered. The N-myristoyl glycine moiety is linked to residue Gly-2. Cys-4 is lipidated: S-palmitoyl cysteine. Basic and acidic residues predominate over residues 7–23 (KNDEETEQKKRSQKIDR). Residues 34–356 (KECKILLLGS…NNALKDSGIL (323 aa)) form the G-alpha domain. The tract at residues 37–50 (KILLLGSGESGKST) is G1 motif. Residues 42–49 (GSGESGKS), 179–185 (LRARTKT), 204–208 (DVGGQ), 273–276 (NKVD), and Ala-328 contribute to the GTP site. Positions 49 and 185 each coordinate Mg(2+). The G2 motif stretch occupies residues 177-185 (DVLRARTKT). The interval 200 to 209 (IHMFDVGGQR) is G3 motif. The G4 motif stretch occupies residues 269 to 276 (ILFLNKVD). A G5 motif region spans residues 326-331 (TQATDT).

It belongs to the G-alpha family. G(q) subfamily. In terms of assembly, g proteins are composed of 3 units; alpha, beta and gamma. The alpha chain contains the guanine nucleotide binding site.

In terms of biological role, guanine nucleotide-binding proteins (G proteins) are involved as modulators or transducers in various transmembrane signaling systems. Involved in conidiation. The chain is Guanine nucleotide-binding protein alpha-3 subunit (gna-3) from Neurospora crassa (strain ATCC 24698 / 74-OR23-1A / CBS 708.71 / DSM 1257 / FGSC 987).